Here is a 208-residue protein sequence, read N- to C-terminus: LexA repressor (208 aa).

Positions 29 to 49 form a DNA-binding region, H-T-H motif; it reads VREICGAVGLSSTSTVHGHIN. Active-site for autocatalytic cleavage activity residues include Ser129 and Lys167.

It belongs to the peptidase S24 family. In terms of assembly, homodimer.

The catalysed reaction is Hydrolysis of Ala-|-Gly bond in repressor LexA.. Its function is as follows. Represses a number of genes involved in the response to DNA damage (SOS response), including recA and lexA. In the presence of single-stranded DNA, RecA interacts with LexA causing an autocatalytic cleavage which disrupts the DNA-binding part of LexA, leading to derepression of the SOS regulon and eventually DNA repair. The protein is LexA repressor of Limosilactobacillus fermentum (strain NBRC 3956 / LMG 18251) (Lactobacillus fermentum).